A 316-amino-acid polypeptide reads, in one-letter code: Transaldolase (316 aa).

K132 serves as the catalytic Schiff-base intermediate with substrate.

Belongs to the transaldolase family. Type 1 subfamily. Homodimer.

It localises to the cytoplasm. The catalysed reaction is D-sedoheptulose 7-phosphate + D-glyceraldehyde 3-phosphate = D-erythrose 4-phosphate + beta-D-fructose 6-phosphate. The protein operates within carbohydrate degradation; pentose phosphate pathway; D-glyceraldehyde 3-phosphate and beta-D-fructose 6-phosphate from D-ribose 5-phosphate and D-xylulose 5-phosphate (non-oxidative stage): step 2/3. In terms of biological role, transaldolase is important for the balance of metabolites in the pentose-phosphate pathway. This Vibrio campbellii (strain ATCC BAA-1116) protein is Transaldolase.